A 189-amino-acid chain; its full sequence is UPF0301 protein RAF_ORF0041 (189 aa).

This sequence belongs to the UPF0301 (AlgH) family.

The sequence is that of UPF0301 protein RAF_ORF0041 from Rickettsia africae (strain ESF-5).